We begin with the raw amino-acid sequence, 304 residues long: Ribosomal RNA small subunit methyltransferase H (304 aa).

S-adenosyl-L-methionine contacts are provided by residues glycine 37 to histidine 39, aspartate 57, phenylalanine 79, aspartate 100, and histidine 107.

The protein belongs to the methyltransferase superfamily. RsmH family.

Its subcellular location is the cytoplasm. It carries out the reaction cytidine(1402) in 16S rRNA + S-adenosyl-L-methionine = N(4)-methylcytidine(1402) in 16S rRNA + S-adenosyl-L-homocysteine + H(+). Its function is as follows. Specifically methylates the N4 position of cytidine in position 1402 (C1402) of 16S rRNA. The sequence is that of Ribosomal RNA small subunit methyltransferase H from Bacteroides fragilis (strain ATCC 25285 / DSM 2151 / CCUG 4856 / JCM 11019 / LMG 10263 / NCTC 9343 / Onslow / VPI 2553 / EN-2).